The primary structure comprises 173 residues: Ribosome maturation factor RimM (173 aa).

A PRC barrel domain is found at 98 to 170 (EDEYYWCDLI…RMLITPLEGL (73 aa)).

This sequence belongs to the RimM family. Binds ribosomal protein uS19.

Its subcellular location is the cytoplasm. In terms of biological role, an accessory protein needed during the final step in the assembly of 30S ribosomal subunit, possibly for assembly of the head region. Essential for efficient processing of 16S rRNA. May be needed both before and after RbfA during the maturation of 16S rRNA. It has affinity for free ribosomal 30S subunits but not for 70S ribosomes. The sequence is that of Ribosome maturation factor RimM from Pelobacter propionicus (strain DSM 2379 / NBRC 103807 / OttBd1).